The sequence spans 581 residues: Coiled-coil domain-containing protein 102A (581 aa).

Disordered stretches follow at residues 1 to 61 (MNHT…GLGC), 156 to 219 (QRVR…IGTD), 496 to 517 (QAEDELDEAHNQTRKLQRSLDE), and 534 to 581 (SRLR…LQIP). Positions 39 to 59 (TPSPSGGTPSSSPPLLLSPGL) are enriched in low complexity. Positions 70 to 164 (REELRLRELE…AQRVRAEQSS (95 aa)) form a coiled coil. Over residues 161 to 184 (EQSSPENASTAPESISSTASTHSN) the composition is skewed to polar residues. Positions 185–202 (QPREAEIKQDNQDEEGVR) are enriched in basic and acidic residues. Positions 270–541 (AALEEDTSKL…LQSRLRRQQN (272 aa)) form a coiled coil. The segment covering 559–581 (EDADGPPSDPDEDEEEELQLQIP) has biased composition (acidic residues).

This Danio rerio (Zebrafish) protein is Coiled-coil domain-containing protein 102A (ccdc102a).